The following is a 597-amino-acid chain: Kelch-like protein 21 (597 aa).

One can recognise a BTB domain in the interval 35-103 (LDVTLEAAGG…SYTGRVAVSG (69 aa)). Residues 138–239 (CLDMQDFAEA…RRFYLLAHVE (102 aa)) enclose the BACK domain. Kelch repeat units lie at residues 287–335 (ILVL…ALGN), 336–382 (DIYV…VLDG), 384–422 (LYVV…ACRG), 423–470 (RLYA…TLNG), 472–512 (MYFV…VLGG), and 513–560 (KLYV…SIFR). The tract at residues 570 to 597 (GRGFELDSGSDDMDPGRPRPPRDPDELH) is disordered. Basic and acidic residues predominate over residues 583–597 (DPGRPRPPRDPDELH).

Component of the BCR(KLHL21) E3 ubiquitin ligase complex, at least composed of CUL3, KLHL21 and RBX1.

The protein localises to the cytoplasm. It is found in the cytoskeleton. The protein resides in the spindle. Its pathway is protein modification; protein ubiquitination. Substrate-specific adapter of a BCR (BTB-CUL3-RBX1) E3 ubiquitin-protein ligase complex required for efficient chromosome alignment and cytokinesis. The BCR(KLHL21) E3 ubiquitin ligase complex regulates localization of the chromosomal passenger complex (CPC) from chromosomes to the spindle midzone in anaphase and mediates the ubiquitination of AURKB. Ubiquitination of AURKB by BCR(KLHL21) E3 ubiquitin ligase complex may not lead to its degradation by the proteasome. The protein is Kelch-like protein 21 (KLHL21) of Homo sapiens (Human).